The chain runs to 2298 residues: MKGHQFKSWIFELREILREIKNSHYFLDSWTQFNSVGSFIHIFFHQERFIKLLDPRIWSILLSRNSQGSTSNRYFTIKGVVLFVVAVLIYRINNRNMVERKNLYLTGLLPIPMNSIGPRNDTLEESFGSSNINRLIVSLLYLPKGKKISESCFLDPKESTWVLPITKKCIMPESNRDSRWWRNWIGKKRDSSCKISNETVAGIEISFKEKDIKYLEFLFVYYMDDSIRKDHDWELFDRLSPSKRRNIINLNSGQLFEILVKDWICYLMFAFREKIPIEVEGFFKQQGAGSTIQSNDIEHVSHLFSRGKWAISLQNCAQFHMWQFRQDLFVSWGKNPHESDFLRNISRENWIWLDNVWLVNRDRFFSKVRNVSSNIQYDSTRSSFVQVTDSRQLKGSSDQSRDRFDSISNEDSEYHTLINQREIQQLKERSILWDPSFLQTERTEIESDRFPKCLSGYSSMSRLFTEREKRMNNHLLPEEIEEFLGNPTRSIRSFFSDRWSELHQGSNPTERSTRDQKLLKKEQDVSFVPSRRSENKEIVNIFKIITYLQNTVSFHPISSDPGCDMVPKDELGSSNKISFLNKNPFFDLFHLFHDQNRRGYTLHHDFESEERFQEMADLFTLSITEPDLVYYKGFAFSIDSYGLDQKQFLNEVFNSRDESKKKSLSALPPIFYEENESFYRRIRKKWVRISCGNELEDPKPKIVVFASNNIMEAVNQDRLIRNLIQIQYSTYGYIRNVLNRFIKKNRSDRNFEYGILRDQIGNDTLNHRTIMKYTINQHLSNLKKSQKKWFDPLILISRTERSMNRDPNAYRYKWSNGSKNFQEHLEHFVSEQKSRFQVVFVRLRINQYSIDWSEVIDKKDLSKSLRFFLSKLLLFLSKLLLFLSNSLPFFFVSFGNIPIHRSEIHIYELKGPNDQLCNQLLESIGLQIVHLKKLKPFLLDDHNTSQKPKFLINGGTISPFLVNKIPKWMIDSFHTRNNRRKSFDNMDFSMISHDQDNWLNPVKPFHRSSLISSFYKANRLRFLNNPHHFCFYCNKRFPFYVEKARINNYDFTYGQFLNILFIRNKIFSLCGGKKKHAFLGRDTISPSPIESQVSNIFISNDFPQSGDERYNLYKSFQFAIRSDPLVRRAIYSIADISGTPLTEGQIVNFERTYCQPLSDMNPSDSEEKNLHQYLNFNSNMGLIHTPCSEKYLPSEKRKKRSLCLKKCVEKGWMYRTFQRDSAFSTLSKRNLFQTYMPWFLTSTGYKYLNLIFLDTFSDLLPILSSSQKFVSIFHDIMHGSDISWRILQKKLCLPQWNLISEISSKCLHNFLLSEEMIHRNNESPLISTHLRSPNVQEFLYSILFLLLVAGYLVRTHLLFVSRAYSELQTEFEKVKSLMIPSYMIELRKLLDRYPTSELNSFWLKNLFLVALEQLGDSLEEIRGSAFGGNMLWGGGPAYGVKSIRSKKKYLNINLIDIIDLISIIPNPINRIIFSRNTRHLSHTSKEIYSLIRKRKNVSGDWIDEKIESWVANSDSIDDKEREFLVQFSTLTTEKRIDQILLSLTHSDHLSKNDSGYQMIEQPGPIYLRYLVDIHKKYLMNYEFNTSCLAERRIFLAHYQTITYSQTSCGANSFHFPSRGKPFSLRLALSPSRGILVIGSIGTGRSYLFKYLATNSYVPFITVFLNKFLDNKLKGFLIDDIDIDDSDDIDASDDIDASDAIDDSDAIDRDLDTELELLTMMNALTMDMMSEIDRFYITLQFELAKAMSPCIIWIPNIHDLDVNEANYLSLGLLVNYLSKDCERCSTRNILVIASTHIPQKVDPTLIAPNKLNTCIKIRRLLIPQQRKHFFTLSYTRGFHLEKKMFHTNGFGSITVGSNARDLVALTNEALSISITQKKSIIDTNTIRSALHRQTWDLRSQVRSVQDHGILFYQIGRAVVQNVLLSNCPLDPISIYMKKKSCNEGDSYLYKWYFELGTSMKKLTILLYLLSCSAGSVAQDLWSLPGPDEKNGITSYGFVENDSDLVHGLLEVEGALVGSSRTEKDCGQFDNDRVTLLLRSEPGNPLYMMQNGSCSIVDQRNLYEKYESEFEEGEGEGVLDPQQIEEDLFNHIVWAPRIWRPWGFLFDCIERPNELGFPYWAGSFRGKRIIYDEKDELQENDSAFLQSGTMQYQARDRSSKEQGFFRISQFIWDPADPLFFLFKDQPFVSVFSHREFFADEEMSKGLLTSQTDPPTSIYKRWFIKNTQEKHFELLIHRQRWLRTNSSLSNANGFFRSNTPSESYQYLSNLFLSNGRLLDQMTKTLLRKRWLFPDEMKIGFM.

ATP is bound at residue Gly-1638–Ser-1645.

It belongs to the Ycf2 family.

The protein resides in the plastid. It is found in the chloroplast stroma. In terms of biological role, probable ATPase of unknown function. Its presence in a non-photosynthetic plant (Epifagus virginiana) and experiments in tobacco indicate that it has an essential function which is probably not related to photosynthesis. The chain is Protein Ycf2 from Gossypium barbadense (Sea Island cotton).